Consider the following 334-residue polypeptide: Trans-1,2-dihydrobenzene-1,2-diol dehydrogenase (334 aa).

The protein belongs to the Gfo/Idh/MocA family. Homodimer. In terms of tissue distribution, kidney.

It catalyses the reaction (1R,2R)-1,2-dihydrobenzene-1,2-diol + NADP(+) = catechol + NADPH + H(+). The catalysed reaction is D-xylose + NADP(+) = D-xylono-1,5-lactone + NADPH + H(+). The polypeptide is Trans-1,2-dihydrobenzene-1,2-diol dehydrogenase (DHDH) (Macaca fascicularis (Crab-eating macaque)).